The following is a 295-amino-acid chain: Enolase-phosphatase E1 (295 aa).

Positions 20 and 22 each coordinate Mg(2+). Residues 153-154 and K187 each bind substrate; that span reads SS. D212 is a binding site for Mg(2+). The interval 260-295 is disordered; the sequence is ETKEENGGATNGKRKIEETNDDVAEEDKAQVYPNKK.

The protein belongs to the HAD-like hydrolase superfamily. MasA/MtnC family. As to quaternary structure, monomer. It depends on Mg(2+) as a cofactor.

The protein localises to the cytoplasm. It localises to the nucleus. It carries out the reaction 5-methylsulfanyl-2,3-dioxopentyl phosphate + H2O = 1,2-dihydroxy-5-(methylsulfanyl)pent-1-en-3-one + phosphate. It functions in the pathway amino-acid biosynthesis; L-methionine biosynthesis via salvage pathway; L-methionine from S-methyl-5-thio-alpha-D-ribose 1-phosphate: step 3/6. It participates in amino-acid biosynthesis; L-methionine biosynthesis via salvage pathway; L-methionine from S-methyl-5-thio-alpha-D-ribose 1-phosphate: step 4/6. Bifunctional enzyme that catalyzes the enolization of 2,3-diketo-5-methylthiopentyl-1-phosphate (DK-MTP-1-P) into the intermediate 2-hydroxy-3-keto-5-methylthiopentenyl-1-phosphate (HK-MTPenyl-1-P), which is then dephosphorylated to form the acireductone 1,2-dihydroxy-3-keto-5-methylthiopentene (DHK-MTPene). This chain is Enolase-phosphatase E1, found in Anopheles gambiae (African malaria mosquito).